Reading from the N-terminus, the 854-residue chain is Probable inorganic carbon transporter subunit DabA (854 aa).

Zn(2+) is bound by residues C378, D380, H560, and C575.

The protein belongs to the inorganic carbon transporter (TC 9.A.2) DabA family. In terms of assembly, forms a complex with DabB. Requires Zn(2+) as cofactor.

The protein resides in the cell membrane. Part of an energy-coupled inorganic carbon pump. This chain is Probable inorganic carbon transporter subunit DabA, found in Bacillus cereus (strain ATCC 14579 / DSM 31 / CCUG 7414 / JCM 2152 / NBRC 15305 / NCIMB 9373 / NCTC 2599 / NRRL B-3711).